Here is a 443-residue protein sequence, read N- to C-terminus: MASTSPATTNGDVAPANYDLVLKLAPHLDRHMIFPLLEFNAGRLKEDETDKAREILAAKYALLKKTNMTDYVANLYCELEGLKEPPAEYAERRQKVFHQLEKYEQETAKITELLQRDDVVNNLRSDKVANLEFLKKEHDVTIDMVNALYDFGQLQYSCGNYADASELLYRFRVLSTDNDKVSYATWGRLACEILTMNWESAMEELQKVRESIDTRLANNPLAQLQHRTELVHWALFPLFNYDKAREPLLDLFFNAGFINTIQANSPWILRYLTVAVITNRGRAKNAGVHQKQMKDVVRIVKQEAYEYQDPITRFVHALCIDFDFEEAQQQLVLAEEVLRSDFFLLAHADDFVDSARHLIFESYCKIHARISLKDLSARLGLNNDDAEKWIVNLIRDTRLDAKIDYKEGTVVMNHPPSSVYQQVIERTKGGFFRTQVLTAAVAR.

The 169-residue stretch at 249 to 417 folds into the PCI domain; sequence LDLFFNAGFI…GTVVMNHPPS (169 aa).

The protein belongs to the eIF-3 subunit E family. As to quaternary structure, component of the eukaryotic translation initiation factor 3 (eIF-3) complex.

The protein resides in the cytoplasm. Its function is as follows. Component of the eukaryotic translation initiation factor 3 (eIF-3) complex, which is involved in protein synthesis of a specialized repertoire of mRNAs and, together with other initiation factors, stimulates binding of mRNA and methionyl-tRNAi to the 40S ribosome. The eIF-3 complex specifically targets and initiates translation of a subset of mRNAs involved in cell proliferation. The chain is Eukaryotic translation initiation factor 3 subunit E (int-6) from Neurospora crassa (strain ATCC 24698 / 74-OR23-1A / CBS 708.71 / DSM 1257 / FGSC 987).